The following is a 622-amino-acid chain: DNA-directed RNA polymerase subunit gamma (622 aa).

Cys70, Cys72, Cys85, and Cys88 together coordinate Zn(2+). Residues Asp466, Asp468, and Asp470 each coordinate Mg(2+).

It belongs to the RNA polymerase beta' chain family. RpoC1 subfamily. As to quaternary structure, in cyanobacteria the RNAP catalytic core is composed of 2 alpha, 1 beta, 1 beta', 1 gamma and 1 omega subunit. When a sigma factor is associated with the core the holoenzyme is formed, which can initiate transcription. The cofactor is Mg(2+). Zn(2+) serves as cofactor.

It catalyses the reaction RNA(n) + a ribonucleoside 5'-triphosphate = RNA(n+1) + diphosphate. Functionally, DNA-dependent RNA polymerase catalyzes the transcription of DNA into RNA using the four ribonucleoside triphosphates as substrates. The protein is DNA-directed RNA polymerase subunit gamma of Thermosynechococcus vestitus (strain NIES-2133 / IAM M-273 / BP-1).